Consider the following 448-residue polypeptide: Exodeoxyribonuclease 7 large subunit (448 aa).

The protein belongs to the XseA family. As to quaternary structure, heterooligomer composed of large and small subunits.

The protein localises to the cytoplasm. The catalysed reaction is Exonucleolytic cleavage in either 5'- to 3'- or 3'- to 5'-direction to yield nucleoside 5'-phosphates.. Functionally, bidirectionally degrades single-stranded DNA into large acid-insoluble oligonucleotides, which are then degraded further into small acid-soluble oligonucleotides. The chain is Exodeoxyribonuclease 7 large subunit from Tolumonas auensis (strain DSM 9187 / NBRC 110442 / TA 4).